The chain runs to 255 residues: Small ribosomal subunit protein eS1 (255 aa).

Positions 1–18 (MAVGKNKRLSKGKKGLKK) are enriched in basic residues. Residues 1–28 (MAVGKNKRLSKGKKGLKKRTQDPFSRKD) are disordered. Residue A2 is modified to N-acetylalanine; partial. Basic and acidic residues predominate over residues 19–28 (RTQDPFSRKD).

This sequence belongs to the eukaryotic ribosomal protein eS1 family. Component of the small ribosomal subunit. Mature ribosomes consist of a small (40S) and a large (60S) subunit. The 40S subunit contains about 33 different proteins and 1 molecule of RNA (18S). The 60S subunit contains about 49 different proteins and 3 molecules of RNA (25S, 5.8S and 5S).

Its subcellular location is the cytoplasm. This is Small ribosomal subunit protein eS1 from Ajellomyces capsulatus (strain H143) (Darling's disease fungus).